A 130-amino-acid polypeptide reads, in one-letter code: UPF0225 protein CE1570 (130 aa).

The protein belongs to the UPF0225 family.

This chain is UPF0225 protein CE1570, found in Corynebacterium efficiens (strain DSM 44549 / YS-314 / AJ 12310 / JCM 11189 / NBRC 100395).